We begin with the raw amino-acid sequence, 406 residues long: Imidazolonepropionase (406 aa).

Positions 75 and 77 each coordinate Fe(3+). Zn(2+)-binding residues include H75 and H77. Positions 84, 147, and 180 each coordinate 4-imidazolone-5-propanoate. Residue Y147 coordinates N-formimidoyl-L-glutamate. H245 is a Fe(3+) binding site. H245 lines the Zn(2+) pocket. Residue Q248 coordinates 4-imidazolone-5-propanoate. Position 320 (D320) interacts with Fe(3+). Zn(2+) is bound at residue D320. The N-formimidoyl-L-glutamate site is built by N322 and G324. 4-imidazolone-5-propanoate is bound at residue T325.

Belongs to the metallo-dependent hydrolases superfamily. HutI family. Zn(2+) serves as cofactor. The cofactor is Fe(3+).

The protein localises to the cytoplasm. It carries out the reaction 4-imidazolone-5-propanoate + H2O = N-formimidoyl-L-glutamate. It participates in amino-acid degradation; L-histidine degradation into L-glutamate; N-formimidoyl-L-glutamate from L-histidine: step 3/3. In terms of biological role, catalyzes the hydrolytic cleavage of the carbon-nitrogen bond in imidazolone-5-propanoate to yield N-formimidoyl-L-glutamate. It is the third step in the universal histidine degradation pathway. The polypeptide is Imidazolonepropionase (Hyphomonas neptunium (strain ATCC 15444)).